Here is a 792-residue protein sequence, read N- to C-terminus: Kinesin-like protein KIFC2 (792 aa).

Disordered regions lie at residues Ala22–Pro45 and Gln142–Gln184. Residues Gln142 to Thr169 show a composition bias toward polar residues. Residues Leu186–Cys347 adopt a coiled-coil conformation. Residues Asn409–Val732 form the Kinesin motor domain. Gly486 to Thr493 contacts ATP. The segment at Leu734–Pro792 is disordered. Residues Arg744 to Pro764 show a composition bias toward low complexity. Over residues Thr765 to Thr774 the composition is skewed to pro residues.

It belongs to the TRAFAC class myosin-kinesin ATPase superfamily. Kinesin family. Present in axons and dendrites of neurons in the central and peripheral nervous systems.

The protein localises to the cytoplasm. It localises to the cytoskeleton. May play a role in microtubule-dependent retrograde axonal transport. May function as the motor for the transport of multivesicular body (MVB)-like organelles in dendrites. In Mus musculus (Mouse), this protein is Kinesin-like protein KIFC2 (Kifc2).